Consider the following 115-residue polypeptide: Ustilagic acid biosynthesis cluster protein orf3 (115 aa).

An N-terminal signal peptide occupies residues 1-38 (MTYSKIACSLGKRGIARAPNQASSFFLLLFLFAKFSQQ). The interval 42 to 62 (SPCLASSGVAKSRGPASTDRP) is disordered.

The protein operates within secondary metabolite biosynthesis. Its function is as follows. Part of the gene cluster that mediates the biosynthesis of the glycolipid biosurfactant ustilagic acid (UA). UA is a secreted cellobiose glycolipid that is toxic for many microorganisms and confers biocontrol activity to U.maydis. UA consists of 15,16-dihydroxypalmitic or 2,15,16-trihydroxypalmitic acid, which is O-glycosidically linked to cellobiose at its terminal hydroxyl group. In addition, the cellobiose moiety is acetylated and acylated with a short-chain hydroxy fatty acid. UA biosynthesis starts with omega-hydroxylation of palmitic acid catalyzed by the cytochrome P450 monooxygenase cyp1. Terminal hydroxylation of palmitic acid precedes subterminal hydroxylation catalyzed by the cytochrome P450 monooxygenase cyp2. Sequential glucosylation of the hydroxy fatty acid is probably catalyzed by the glycosyltransferase ugt1. The cellobiose lipid is further decorated by acetylation of the proximal glucose residue and by acylation with a short-chain beta-hydroxy fatty acid at the distal glucose residue. The acyltransferase uat1 may be a good candidate for catalyzing either acetylation or acylation of the cellobiose lipid. The fatty acid synthase fas2 may be involved in synthesis of the carbon backbone of the short-chain beta-hydroxy fatty acid esterified to the cellobiose disaccharide. The secreted UA consists of a mixture of both alpha-hydroxylated and non-hydroxylated glycolipids; therefore, alpha-hydroxylation of the long-chain fatty, catalyzed by the fatty acid hydroxylase ahd1, occurs late in UA biosynthesis and may be the last step before secretion. This is Ustilagic acid biosynthesis cluster protein orf3 from Mycosarcoma maydis (Corn smut fungus).